The sequence spans 503 residues: Palmitoleoyl-protein carboxylesterase NOTUM (503 aa).

A signal peptide spans 1 to 19 (MGGEVRVLLLLGLLHWVGG). The tract at residues 23 to 53 (RKTWRRRGQQPPQPPPPPPLPQRAEVEPGAG) is disordered. A compositionally biased stretch (pro residues) spans 33-43 (PPQPPPPPPLP). Position 88 is a phosphoserine (Ser88). Asn103 carries N-linked (GlcNAc...) asparagine glycosylation. Residues Ser239, Asp347, and His396 each act as charge relay system in the active site.

This sequence belongs to the pectinacetylesterase family. Notum subfamily. As to expression, widely expressed. Expressed in lung, ovary, kidney, liver and brain. Not detected in thymus, heart, spleen, stomach, skeletal muscle and bone marrow.

Its subcellular location is the secreted. The enzyme catalyses [Wnt protein]-O-(9Z)-hexadecenoyl-L-serine + H2O = [Wnt protein]-L-serine + (9Z)-hexadecenoate + H(+). Carboxylesterase that acts as a key negative regulator of the Wnt signaling pathway by specifically mediating depalmitoleoylation of WNT proteins. Serine palmitoleoylation of WNT proteins is required for efficient binding to frizzled receptors. The polypeptide is Palmitoleoyl-protein carboxylesterase NOTUM (Mus musculus (Mouse)).